Here is a 287-residue protein sequence, read N- to C-terminus: Acetyl-coenzyme A carboxylase carboxyl transferase subunit beta (287 aa).

Residues 25–287 (IWTKCSGCVQ…KLTQQSFSEK (263 aa)) form the CoA carboxyltransferase N-terminal domain. Zn(2+) contacts are provided by Cys29, Cys32, Cys48, and Cys51. The C4-type zinc-finger motif lies at 29–51 (CSGCVQLLYTKELERNLQVCPKC).

Belongs to the AccD/PCCB family. As to quaternary structure, acetyl-CoA carboxylase is a heterohexamer composed of biotin carboxyl carrier protein (AccB), biotin carboxylase (AccC) and two subunits each of ACCase subunit alpha (AccA) and ACCase subunit beta (AccD). Requires Zn(2+) as cofactor.

It is found in the cytoplasm. The enzyme catalyses N(6)-carboxybiotinyl-L-lysyl-[protein] + acetyl-CoA = N(6)-biotinyl-L-lysyl-[protein] + malonyl-CoA. It functions in the pathway lipid metabolism; malonyl-CoA biosynthesis; malonyl-CoA from acetyl-CoA: step 1/1. Functionally, component of the acetyl coenzyme A carboxylase (ACC) complex. Biotin carboxylase (BC) catalyzes the carboxylation of biotin on its carrier protein (BCCP) and then the CO(2) group is transferred by the transcarboxylase to acetyl-CoA to form malonyl-CoA. This is Acetyl-coenzyme A carboxylase carboxyl transferase subunit beta from Blochmanniella floridana.